Here is a 2193-residue protein sequence, read N- to C-terminus: Genome polyprotein (2193 aa).

The disordered stretch occupies residues 1–22 (MGSQVSTQRSGSHENSNSATEG). Gly-2 carries the N-myristoyl glycine; by host lipid modification. Residues 2 to 1503 (GSQVSTQRSG…HLNRAVLVMQ (1502 aa)) lie on the Cytoplasmic side of the membrane. Residues 568–588 (RVADVIESSIGDSVSRALTQA) form an amphipathic alpha-helix region. Active-site for protease 2A activity residues include His-883 and Asp-901. Positions 918 and 920 each coordinate Zn(2+). Cys-972 acts as the For protease 2A activity in catalysis. Zn(2+)-binding residues include Cys-978 and His-980. Residues 1216–1374 (EKRMNNYMQF…SKTDLGRLDA (159 aa)) form the SF3 helicase domain. Position 1240–1247 (1240–1247 (GSPGTGKS)) interacts with ATP. Zn(2+) contacts are provided by Cys-1381, Cys-1392, and Cys-1397. Residues 1381–1397 (CSENNTANFKRCSPLVC) form a C4-type; degenerate zinc finger. Residues 1504 to 1519 (SIATVVAVVSLVYVIY) lie within the membrane without spanning it. The Cytoplasmic segment spans residues 1520 to 2193 (KLFAGFQGAY…NLRRNWLELF (674 aa)). Tyr-1529 bears the O-(5'-phospho-RNA)-tyrosine mark. Positions 1549-1727 (GPSLDFALSL…FCAGLKRSYF (179 aa)) constitute a Peptidase C3 domain. Catalysis depends on for protease 3C activity residues His-1588, Glu-1619, and Cys-1695. Residues 1958-2073 (GSLFAFDYSG…ASYPFPIDCL (116 aa)) form the RdRp catalytic domain. 2 residues coordinate Mg(2+): Asp-1964 and Asp-2060.

Belongs to the picornaviruses polyprotein family. Interacts with capsid protein VP1 and capsid protein VP3 to form heterotrimeric protomers. As to quaternary structure, interacts with capsid protein VP0, and capsid protein VP3 to form heterotrimeric protomers. Five protomers subsequently associate to form pentamers which serve as building blocks for the capsid. Interacts with capsid protein VP2, capsid protein VP3 and capsid protein VP4 following cleavage of capsid protein VP0. Interacts with host SCARB2. Interacts with host ARF6; this interaction mediates viral endocytosis. In terms of assembly, interacts with capsid protein VP1 and capsid protein VP3 in the mature capsid. Interacts with host SCARB2. Interacts with capsid protein VP0 and capsid protein VP1 to form heterotrimeric protomers. Five protomers subsequently associate to form pentamers which serve as building blocks for the capsid. Interacts with capsid protein VP4 in the mature capsid. Interacts with protein 2C; this interaction may be important for virion morphogenesis. As to quaternary structure, interacts with capsid protein VP1 and capsid protein VP3. In terms of assembly, homodimer. Interacts with host BAX; this interaction activates the mitochondrial apoptotic pathway. Interacts with host ILF2. As to quaternary structure, homohexamer; forms a hexameric ring structure with 6-fold symmetry characteristic of AAA+ ATPases. Interacts (via N-terminus) with host RTN3 (via reticulon domain); this interaction is important for viral replication. Interacts with capsid protein VP3; this interaction may be important for virion morphogenesis. In terms of assembly, interacts with protein 3CD. Homodimer. Interacts with host GBF1. Interacts (via GOLD domain) with host ACBD3 (via GOLD domain); this interaction allows the formation of a viral protein 3A/ACBD3 heterotetramer with a 2:2 stoichiometry, which will stimulate the recruitment of host PI4KB in order to synthesize PI4P at the viral RNA replication sites. As to quaternary structure, interacts with RNA-directed RNA polymerase. In terms of assembly, interacts with host IFIH1/MDA5; this interaction inhibits host IFIH1. Interacts with protein 3AB and with RNA-directed RNA polymerase. As to quaternary structure, interacts with Viral protein genome-linked and with protein 3CD. It depends on Mg(2+) as a cofactor. Post-translationally, specific enzymatic cleavages in vivo by the viral proteases yield processing intermediates and the mature proteins. Myristoylation is required for the formation of pentamers during virus assembly. Further assembly of 12 pentamers and a molecule of genomic RNA generates the provirion. In terms of processing, during virion maturation, immature virions are rendered infectious following cleavage of VP0 into VP4 and VP2. This maturation seems to be an autocatalytic event triggered by the presence of RNA in the capsid and it is followed by a conformational change infectious virion. Post-translationally, myristoylation is required during RNA encapsidation and formation of the mature virus particle. VPg is uridylylated by the polymerase into VPg-pUpU. This acts as a nucleotide-peptide primer for the genomic RNA replication.

The protein localises to the virion. It localises to the host cytoplasm. Its subcellular location is the host cytoplasmic vesicle membrane. It is found in the host nucleus. It carries out the reaction a ribonucleoside 5'-triphosphate + H2O = a ribonucleoside 5'-diphosphate + phosphate + H(+). The catalysed reaction is Selective cleavage of Tyr-|-Gly bond in the picornavirus polyprotein.. The enzyme catalyses RNA(n) + a ribonucleoside 5'-triphosphate = RNA(n+1) + diphosphate. It catalyses the reaction Selective cleavage of Gln-|-Gly bond in the poliovirus polyprotein. In other picornavirus reactions Glu may be substituted for Gln, and Ser or Thr for Gly.. Its activity is regulated as follows. Replication or transcription is subject to high level of random mutations by the nucleotide analog ribavirin. Its function is as follows. Forms an icosahedral capsid of pseudo T=3 symmetry with capsid proteins VP2 and VP3. The capsid is 300 Angstroms in diameter, composed of 60 copies of each capsid protein and enclosing the viral positive strand RNA genome. Capsid protein VP1 mainly forms the vertices of the capsid. Capsid protein VP1, together with VP2, interacts with host cell receptor SCARB2 to provide virion attachment to target host cells. This attachment induces virion internalization. After binding to its receptor, the capsid undergoes conformational changes. Capsid protein VP1 N-terminus (that contains an amphipathic alpha-helix) and capsid protein VP4 are externalized. Together, they shape a pore in the host membrane through which viral genome is translocated to host cell cytoplasm. Forms an icosahedral capsid of pseudo T=3 symmetry with capsid proteins VP2 and VP3. The capsid is 300 Angstroms in diameter, composed of 60 copies of each capsid protein and enclosing the viral positive strand RNA genome. Capsid protein VP2, together with VP1, interacts with host cell receptor SCARB2 to provide virion attachment to target host cells. In terms of biological role, forms an icosahedral capsid of pseudo T=3 symmetry with capsid proteins VP2 and VP3. The capsid is 300 Angstroms in diameter, composed of 60 copies of each capsid protein and enclosing the viral positive strand RNA genome. Functionally, lies on the inner surface of the capsid shell. After binding to the host receptor, the capsid undergoes conformational changes. Capsid protein VP4 is released, Capsid protein VP1 N-terminus is externalized, and together, they shape a pore in the host membrane through which the viral genome is translocated into the host cell cytoplasm. Its function is as follows. Component of immature procapsids, which is cleaved into capsid proteins VP4 and VP2 after maturation. Allows the capsid to remain inactive before the maturation step. Cysteine protease that cleaves viral polyprotein and specific host proteins. It is responsible for the autocatalytic cleavage between the P1 and P2 regions, which is the first cleavage occurring in the polyprotein. Also cleaves the host translation initiation factor EIF4G1, in order to shut down the capped cellular mRNA translation. Inhibits the host nucleus-cytoplasm protein and RNA trafficking by cleaving host members of the nuclear pores. Counteracts stress granule formation probably by antagonizing its assembly or promoting its dissassembly. Cleaves and inhibits host IFIH1/MDA5, thereby inhibiting the type-I IFN production and the establishment of the antiviral state. Cleaves and inhibits host MAVS, thereby inhibiting the type-I IFN production and the establishment of the antiviral state. In terms of biological role, plays an essential role in the virus replication cycle by acting as a viroporin. Creates a pore in the host endoplasmic reticulum and as a consequence releases Ca2+ in the cytoplasm of infected cell. In turn, high levels of cytoplasmic calcium may trigger membrane trafficking and transport of viral ER-associated proteins to viroplasms, sites of viral genome replication. Functionally, induces and associates with structural rearrangements of intracellular membranes. Displays RNA-binding, nucleotide binding and NTPase activities. May play a role in virion morphogenesis and viral RNA encapsidation by interacting with the capsid protein VP3. Its function is as follows. Localizes the viral replication complex to the surface of membranous vesicles. Together with protein 3CD binds the Cis-Active RNA Element (CRE) which is involved in RNA synthesis initiation. Acts as a cofactor to stimulate the activity of 3D polymerase, maybe through a nucleid acid chaperone activity. Localizes the viral replication complex to the surface of membranous vesicles. It inhibits host cell endoplasmic reticulum-to-Golgi apparatus transport and causes the disassembly of the Golgi complex, possibly through GBF1 interaction. This would result in depletion of MHC, trail receptors and IFN receptors at the host cell surface. Plays an essential role in viral RNA replication by recruiting ACBD3 and PI4KB at the viral replication sites, thereby allowing the formation of the rearranged membranous structures where viral replication takes place. In terms of biological role, acts as a primer for viral RNA replication and remains covalently bound to viral genomic RNA. VPg is uridylylated prior to priming replication into VPg-pUpU. The oriI viral genomic sequence may act as a template for this. The VPg-pUpU is then used as primer on the genomic RNA poly(A) by the RNA-dependent RNA polymerase to replicate the viral genome. During genome replication, the VPg-RNA linkage is removed by the host TDP2, thereby accelerating replication. During the late stage of the replication cycle, host TDP2 is excluded from sites of viral RNA synthesis and encapsidation, allowing for the generation of progeny virions. Functionally, involved in the viral replication complex and viral polypeptide maturation. It exhibits protease activity with a specificity and catalytic efficiency that is different from protease 3C. Protein 3CD lacks polymerase activity. Protein 3CD binds to the 5'UTR of the viral genome. Its function is as follows. Major viral protease that mediates proteolytic processing of the polyprotein. Cleaves host EIF5B, contributing to host translation shutoff. Also cleaves host PABPC1, contributing to host translation shutoff. Disassembles host cytoplasmic stress granules by cleaving host G3BP1, although this effect is less prononced than the inhibition induced by protease 2A. Cleaves host RIGI and thus contributes to the inhibition of type I interferon production. Cleaves host IRF7 and thus contributes to the inhibition of type I interferon production. Cleaves host HNRNPA1 thereby increasing the translation of apoptosis protease activating factor APAF1, leading to apoptosis of the host cell. Cleaves host NLRP1, triggers host N-glycine-mediated degradation of the autoinhibitory NLRP1 N-terminal fragment. Replicates the viral genomic RNA on the surface of intracellular membranes. May form linear arrays of subunits that propagate along a strong head-to-tail interaction called interface-I. Covalently attaches UMP to a tyrosine of VPg, which is used to prime RNA synthesis. The positive stranded RNA genome is first replicated at virus induced membranous vesicles, creating a dsRNA genomic replication form. This dsRNA is then used as template to synthesize positive stranded RNA genomes. ss(+)RNA genomes are either translated, replicated or encapsidated. The chain is Genome polyprotein from Human enterovirus 71 (strain 7423/MS/87) (EV71).